Here is a 297-residue protein sequence, read N- to C-terminus: Small ribosomal subunit protein uS9m (297 aa).

The segment at 278-297 is disordered; the sequence is VERKKPGKRKARKMPTWVKR.

The protein belongs to the universal ribosomal protein uS9 family.

The protein resides in the mitochondrion. This Kluyveromyces lactis (strain ATCC 8585 / CBS 2359 / DSM 70799 / NBRC 1267 / NRRL Y-1140 / WM37) (Yeast) protein is Small ribosomal subunit protein uS9m (MRPS9).